Consider the following 303-residue polypeptide: MKRARIIYNPTSGREIFKKHLAQVLQKFEQAGYETSTHATTCAGDATHAAKEAALREFDLIIAAGGDGTINEVVNGLAPLDNRPTLGVIPVGTTNDFARALGIPREDILKAADTVINGVARPIDIGQVNGQYFINIAGGGRLTELTYDVPSKLKTMLGQLAYYLKGMEMLPSLRPTEVEIEYDGKLFQGEIMLFLVTLTNSVGGFEKLAPDSSLNDGMFDLMILKKANLAEFIRVATMALRGEHINDQHIIYTKANRVKVNVSEKMQLNLDGEYGGMLPGEFVNLYRHIHVVMPKEKAEQLDD.

In terms of domain architecture, DAGKc spans 1-132; sequence MKRARIIYNP…IDIGQVNGQY (132 aa). ATP is bound by residues 9–13, Thr40, 66–72, and Thr93; these read NPTSG and GDGTINE. Ser213, Asp216, and Met218 together coordinate Mg(2+). Glu273 functions as the Proton acceptor in the catalytic mechanism.

The protein belongs to the diacylglycerol/lipid kinase family. Mg(2+) is required as a cofactor.

It carries out the reaction a 1,2-diacyl-sn-glycerol + ATP = a 1,2-diacyl-sn-glycero-3-phosphate + ADP + H(+). The enzyme catalyses 1,2-di-(9Z-octadecenoyl)-sn-glycerol + ATP = 1,2-di-(9Z-octadecenoyl)-sn-glycero-3-phosphate + ADP + H(+). Catalyzes the phosphorylation of diacylglycerol (DAG) into phosphatidic acid. Is a key enzyme involved in the production of lipoteichoic acid by reintroducing DAG formed from the breakdown of membrane phospholipids into the phosphatidylglycerol biosynthetic pathway. Is more active toward long-chain DAG compared with short-chain DAG. Is not able to phosphorylate substrates other than DAG, such as monoacylglycerol, ceramide, undecaprenol, phosphatidylinositol, or sphingosine. The chain is Diacylglycerol kinase (dagK) from Bacillus subtilis (strain 168).